Here is a 571-residue protein sequence, read N- to C-terminus: Proline--tRNA ligase (571 aa).

The protein belongs to the class-II aminoacyl-tRNA synthetase family. ProS type 1 subfamily. In terms of assembly, homodimer.

The protein resides in the cytoplasm. It catalyses the reaction tRNA(Pro) + L-proline + ATP = L-prolyl-tRNA(Pro) + AMP + diphosphate. Its function is as follows. Catalyzes the attachment of proline to tRNA(Pro) in a two-step reaction: proline is first activated by ATP to form Pro-AMP and then transferred to the acceptor end of tRNA(Pro). As ProRS can inadvertently accommodate and process non-cognate amino acids such as alanine and cysteine, to avoid such errors it has two additional distinct editing activities against alanine. One activity is designated as 'pretransfer' editing and involves the tRNA(Pro)-independent hydrolysis of activated Ala-AMP. The other activity is designated 'posttransfer' editing and involves deacylation of mischarged Ala-tRNA(Pro). The misacylated Cys-tRNA(Pro) is not edited by ProRS. The polypeptide is Proline--tRNA ligase (Histophilus somni (strain 129Pt) (Haemophilus somnus)).